A 250-amino-acid chain; its full sequence is Triosephosphate isomerase (250 aa).

A substrate-binding site is contributed by 9 to 11 (NWK). The active-site Electrophile is the His95. Glu167 functions as the Proton acceptor in the catalytic mechanism. Substrate-binding positions include Gly173, Ser213, and 234–235 (GG).

Belongs to the triosephosphate isomerase family. As to quaternary structure, homodimer.

Its subcellular location is the cytoplasm. It catalyses the reaction D-glyceraldehyde 3-phosphate = dihydroxyacetone phosphate. Its pathway is carbohydrate biosynthesis; gluconeogenesis. It functions in the pathway carbohydrate degradation; glycolysis; D-glyceraldehyde 3-phosphate from glycerone phosphate: step 1/1. Functionally, involved in the gluconeogenesis. Catalyzes stereospecifically the conversion of dihydroxyacetone phosphate (DHAP) to D-glyceraldehyde-3-phosphate (G3P). The polypeptide is Triosephosphate isomerase (Exiguobacterium sibiricum (strain DSM 17290 / CCUG 55495 / CIP 109462 / JCM 13490 / 255-15)).